The sequence spans 415 residues: 2-oxoadipate dioxygenase/decarboxylase (415 aa).

2-oxoadipate is bound by residues histidine 66, arginine 70, and histidine 225. Histidine 66 contributes to the Fe(2+) binding site. Fe(2+) contacts are provided by histidine 225 and glutamate 296. Alanine 361 provides a ligand contact to 2-oxoadipate.

It belongs to the 2-oxoadipate dioxygenase/decarboxylase family. Fe(2+) is required as a cofactor.

It carries out the reaction 2-oxoadipate + O2 = (R)-2-hydroxyglutarate + CO2. Functionally, catalyzes the decarboxylation and hydroxylation of 2-oxoadipate (2OA) to form D-2-hydroxyglutarate (D-2-HGA). The chain is 2-oxoadipate dioxygenase/decarboxylase from Mycobacterium bovis (strain ATCC BAA-935 / AF2122/97).